The chain runs to 125 residues: Small ribosomal subunit protein uS12 (125 aa).

At Asp89 the chain carries 3-methylthioaspartic acid.

Belongs to the universal ribosomal protein uS12 family. In terms of assembly, part of the 30S ribosomal subunit. Contacts proteins S8 and S17. May interact with IF1 in the 30S initiation complex.

In terms of biological role, with S4 and S5 plays an important role in translational accuracy. Functionally, interacts with and stabilizes bases of the 16S rRNA that are involved in tRNA selection in the A site and with the mRNA backbone. Located at the interface of the 30S and 50S subunits, it traverses the body of the 30S subunit contacting proteins on the other side and probably holding the rRNA structure together. The combined cluster of proteins S8, S12 and S17 appears to hold together the shoulder and platform of the 30S subunit. This chain is Small ribosomal subunit protein uS12, found in Clostridium novyi (strain NT).